The sequence spans 227 residues: Translation initiation factor 6 (227 aa).

The protein belongs to the eIF-6 family.

Functionally, binds to the 50S ribosomal subunit and prevents its association with the 30S ribosomal subunit to form the 70S initiation complex. This is Translation initiation factor 6 from Methanococcus maripaludis (strain C6 / ATCC BAA-1332).